The chain runs to 523 residues: Peptide chain release factor 3 (523 aa).

A tr-type G domain is found at Glu10 to Glu277. GTP is bound by residues Ser19–Thr26, Asp87–His91, and Asn141–Asp144.

Belongs to the TRAFAC class translation factor GTPase superfamily. Classic translation factor GTPase family. PrfC subfamily.

Its subcellular location is the cytoplasm. In terms of biological role, increases the formation of ribosomal termination complexes and stimulates activities of RF-1 and RF-2. It binds guanine nucleotides and has strong preference for UGA stop codons. It may interact directly with the ribosome. The stimulation of RF-1 and RF-2 is significantly reduced by GTP and GDP, but not by GMP. The polypeptide is Peptide chain release factor 3 (Lactobacillus acidophilus (strain ATCC 700396 / NCK56 / N2 / NCFM)).